Here is a 431-residue protein sequence, read N- to C-terminus: Histidinol dehydrogenase 1 (431 aa).

3 residues coordinate NAD(+): Tyr127, Gln188, and Asn211. Substrate is bound by residues Ser234, Gln256, and His259. Gln256 and His259 together coordinate Zn(2+). Active-site proton acceptor residues include Glu324 and His325. Positions 325, 358, 412, and 417 each coordinate substrate. Asp358 contributes to the Zn(2+) binding site. A Zn(2+)-binding site is contributed by His417.

Belongs to the histidinol dehydrogenase family. It depends on Zn(2+) as a cofactor.

It carries out the reaction L-histidinol + 2 NAD(+) + H2O = L-histidine + 2 NADH + 3 H(+). It participates in amino-acid biosynthesis; L-histidine biosynthesis; L-histidine from 5-phospho-alpha-D-ribose 1-diphosphate: step 9/9. In terms of biological role, catalyzes the sequential NAD-dependent oxidations of L-histidinol to L-histidinaldehyde and then to L-histidine. The chain is Histidinol dehydrogenase 1 (hisD1) from Nostoc sp. (strain PCC 7120 / SAG 25.82 / UTEX 2576).